Reading from the N-terminus, the 436-residue chain is Trigger factor (436 aa).

Residues Glu-161–Pro-246 enclose the PPIase FKBP-type domain.

The protein belongs to the FKBP-type PPIase family. Tig subfamily.

It is found in the cytoplasm. It carries out the reaction [protein]-peptidylproline (omega=180) = [protein]-peptidylproline (omega=0). Functionally, involved in protein export. Acts as a chaperone by maintaining the newly synthesized protein in an open conformation. Functions as a peptidyl-prolyl cis-trans isomerase. The protein is Trigger factor of Pseudomonas fluorescens (strain Pf0-1).